The sequence spans 133 residues: Transmembrane protein 60 (133 aa).

4 helical membrane passes run 5-25 (LAQR…MLVL), 35-55 (WFLI…LLIV), 78-98 (AWYL…CAKL), and 110-130 (FIPL…NVFF).

It localises to the membrane. In Homo sapiens (Human), this protein is Transmembrane protein 60 (TMEM60).